The sequence spans 437 residues: MVSWRRFCWHYHGWTLGCYMLLAIIALKLSLRLKCDFDVMDLDSKEFQSQYCRDLLYKTLELPAKSSINCSGVIRGEQKAVTQALLNNLELKRKRQSFTEADYLSMTADCEHFKTQRKFIQVPLSKEEANFPIAYSMVIHEKIENFERLLRAVYTPQNIYCVHVDQKSSETFQQAVRAIVSCFPNVFIANKLVSVVYASWSRVQADLNCMEDLLQSPVPWEYLLNTCGTDFPIKTNAEMVKALKLLNGQNSMESEVPPPHKTFRWKYHYEVADTLYRTSKEKTPPPNNITMFTGNAYMVASRDFIEHVLSNSKARQLIEWVKDTYSPDEHLWATLQRASWMPGSDPLHPKFDLSDMRSIARLTKWQDHEGDIENGAPYTSCSGIHQRAICVYGSGDLHWILQNHHLLANKFDPKVDDNVLQCLEEYLRHKAIYGTEL.

At 1–6 the chain is on the cytoplasmic side; it reads MVSWRR. A helical; Signal-anchor for type II membrane protein transmembrane segment spans residues 7–27; the sequence is FCWHYHGWTLGCYMLLAIIAL. The Lumenal segment spans residues 28-437; it reads KLSLRLKCDF…RHKAIYGTEL (410 aa). 4 disulfides stabilise this stretch: Cys-70/Cys-227, Cys-161/Cys-381, Cys-182/Cys-209, and Cys-390/Cys-422. Asn-288 carries N-linked (GlcNAc...) asparagine glycosylation.

It belongs to the glycosyltransferase 14 family. Post-translationally, N-glycosylated.

It localises to the golgi apparatus membrane. It catalyses the reaction a 3-O-[beta-D-galactosyl-(1-&gt;3)-N-acetyl-alpha-D-galactosaminyl]-L-seryl-[protein] + UDP-N-acetyl-alpha-D-glucosamine = 3-O-{beta-D-galactosyl-(1-&gt;3)-[N-acetyl-beta-D-glucosaminyl-(1-&gt;6)]-N-acetyl-alpha-D-galactosaminyl}-L-seryl-[protein] + UDP + H(+). It carries out the reaction a 3-O-[beta-D-galactosyl-(1-&gt;3)-N-acetyl-alpha-D-galactosaminyl]-L-threonyl-[protein] + UDP-N-acetyl-alpha-D-glucosamine = a 3-O-{beta-D-galactosyl-(1-&gt;3)-[N-acetyl-beta-D-glucosaminyl-(1-&gt;6)]-N-acetyl-alpha-D-galactosaminyl}-L-threonyl-[protein] + UDP + H(+). The enzyme catalyses a beta-D-Gal-(1-&gt;4)-beta-D-GlcNAc-(1-&gt;3)-beta-D-Gal-(1-&gt;4)-beta-D-GlcNAc derivative + UDP-N-acetyl-alpha-D-glucosamine = a beta-D-Gal-(1-&gt;4)-beta-D-GlcNAc-(1-&gt;3)-[beta-D-GlcNAc-(1-&gt;6)]-beta-D-Gal-(1-&gt;4)-N-acetyl-beta-D-glucosaminyl derivative + UDP + H(+). The catalysed reaction is 3-O-[N-acetyl-beta-D-glucosaminyl-(1-&gt;3)-N-acetyl-alpha-D-galactosaminyl]-L-seryl-[protein] + UDP-N-acetyl-alpha-D-glucosamine = 3-O-[N-acetyl-beta-D-glucosaminyl-(1-&gt;3)-[N-acetyl-beta-D-glucosaminyl-(1-&gt;6)]-N-acetyl-alpha-D-galactosaminyl]-L-seryl-[protein] + UDP + H(+). It catalyses the reaction a 3-O-[N-acetyl-beta-D-glucosaminyl-(1-&gt;3)-N-acetyl-alpha-D-galactosaminyl]-L-threonyl-[protein] + UDP-N-acetyl-alpha-D-glucosamine = 3-O-[N-acetyl-beta-D-glucosaminyl-(1-&gt;3)-[N-acetyl-beta-D-glucosaminyl-(1-&gt;6)]-N-acetyl-alpha-D-galactosaminyl]-L-threonyl-[protein] + UDP + H(+). It participates in protein modification; protein glycosylation. In terms of biological role, glycosyltransferase that can synthesize all known mucin beta 6 N-acetylglucosaminides. Mediates core 2 and core 4 O-glycan branching, 2 important steps in mucin-type biosynthesis. Also has I-branching enzyme activity by converting linear into branched poly-N-acetyllactosaminoglycans, leading to introduce the blood group I antigen during embryonic development. The chain is Beta-1,3-galactosyl-O-glycosyl-glycoprotein beta-1,6-N-acetylglucosaminyltransferase 3 (Gcnt3) from Rattus norvegicus (Rat).